A 373-amino-acid polypeptide reads, in one-letter code: Anhydro-N-acetylmuramic acid kinase (373 aa).

Position 12 to 19 (12 to 19 (GTSLDGVD)) interacts with ATP.

It belongs to the anhydro-N-acetylmuramic acid kinase family.

The catalysed reaction is 1,6-anhydro-N-acetyl-beta-muramate + ATP + H2O = N-acetyl-D-muramate 6-phosphate + ADP + H(+). It participates in amino-sugar metabolism; 1,6-anhydro-N-acetylmuramate degradation. It functions in the pathway cell wall biogenesis; peptidoglycan recycling. Catalyzes the specific phosphorylation of 1,6-anhydro-N-acetylmuramic acid (anhMurNAc) with the simultaneous cleavage of the 1,6-anhydro ring, generating MurNAc-6-P. Is required for the utilization of anhMurNAc either imported from the medium or derived from its own cell wall murein, and thus plays a role in cell wall recycling. The sequence is that of Anhydro-N-acetylmuramic acid kinase from Salmonella paratyphi A (strain ATCC 9150 / SARB42).